The primary structure comprises 616 residues: Homeodomain-interacting protein kinase 4 (616 aa).

The Protein kinase domain occupies 11–347 (YDIIEVLGKG…PSAALRHPFV (337 aa)). ATP contacts are provided by residues 17-25 (LGKGTFGEV) and Lys40. The active-site Proton acceptor is the Asp136. The segment at 487-616 (HKARKAPAGS…SFLQHVGGHH (130 aa)) is disordered. The segment covering 497 to 512 (KSDSNFSNLIRLSQAS) has biased composition (polar residues). Residue Ser512 is modified to Phosphoserine. The segment covering 542-560 (REGDGPSIKDRPMDAERSG) has biased composition (basic and acidic residues).

This sequence belongs to the protein kinase superfamily. CMGC Ser/Thr protein kinase family. HIPK subfamily. Post-translationally, autophosphorylated.

The protein resides in the cytoplasm. The catalysed reaction is L-seryl-[protein] + ATP = O-phospho-L-seryl-[protein] + ADP + H(+). It catalyses the reaction L-threonyl-[protein] + ATP = O-phospho-L-threonyl-[protein] + ADP + H(+). In terms of biological role, protein kinase that phosphorylates TP53, and thus induces TP53 repression of BIRC5 promoter. May act as a corepressor of transcription factors (Potential). This Rattus norvegicus (Rat) protein is Homeodomain-interacting protein kinase 4 (Hipk4).